Consider the following 363-residue polypeptide: S-adenosylmethionine:tRNA ribosyltransferase-isomerase (363 aa).

This sequence belongs to the QueA family. Monomer.

Its subcellular location is the cytoplasm. It carries out the reaction 7-aminomethyl-7-carbaguanosine(34) in tRNA + S-adenosyl-L-methionine = epoxyqueuosine(34) in tRNA + adenine + L-methionine + 2 H(+). It participates in tRNA modification; tRNA-queuosine biosynthesis. Transfers and isomerizes the ribose moiety from AdoMet to the 7-aminomethyl group of 7-deazaguanine (preQ1-tRNA) to give epoxyqueuosine (oQ-tRNA). The sequence is that of S-adenosylmethionine:tRNA ribosyltransferase-isomerase from Synechococcus sp. (strain RCC307).